Consider the following 277-residue polypeptide: Inositol monophosphatase 1 (277 aa).

Residues Glu70, Asp90, Ile92, and Asp93 each coordinate Mg(2+). Glu70 contributes to the substrate binding site. Residues 92–95 (IDGT), 194–196 (GTA), Glu213, and Asp220 each bind substrate. Asp220 provides a ligand contact to Mg(2+).

Belongs to the inositol monophosphatase superfamily. As to quaternary structure, homodimer. Mg(2+) is required as a cofactor. Ubiquitous.

The protein resides in the cytoplasm. It carries out the reaction a myo-inositol phosphate + H2O = myo-inositol + phosphate. It catalyses the reaction 1D-myo-inositol 1-phosphate + H2O = myo-inositol + phosphate. The catalysed reaction is 1D-myo-inositol 2-phosphate + H2O = myo-inositol + phosphate. The enzyme catalyses 1D-myo-inositol 3-phosphate + H2O = myo-inositol + phosphate. It carries out the reaction 1D-myo-inositol 4-phosphate + H2O = myo-inositol + phosphate. It catalyses the reaction 1D-myo-inositol 5-phosphate + H2O = myo-inositol + phosphate. The catalysed reaction is 1D-myo-inositol 6-phosphate + H2O = myo-inositol + phosphate. The enzyme catalyses scyllo-inositol 1-phosphate + H2O = scyllo-inositol + phosphate. It carries out the reaction alpha-D-galactose 1-phosphate + H2O = D-galactose + phosphate. It catalyses the reaction alpha-D-glucose 1-phosphate + H2O = D-glucose + phosphate. The catalysed reaction is D-glucose 6-phosphate + H2O = D-glucose + phosphate. The enzyme catalyses beta-D-fructose 1-phosphate + H2O = D-fructose + phosphate. It carries out the reaction glycerol 2-phosphate + H2O = glycerol + phosphate. It catalyses the reaction adenosine 2'-phosphate + H2O = adenosine + phosphate. It participates in polyol metabolism; myo-inositol biosynthesis; myo-inositol from D-glucose 6-phosphate: step 2/2. Its activity is regulated as follows. Activity with myo-inositol monophosphate and D-galactose 1-phosphate is inhibited by Li(+), Ca(2+) and Mn(2+), but also by Mg(2+) at concentrations above 3 mM. In terms of biological role, phosphatase involved in the dephosphorylation of myo-inositol monophosphate to generate myo-inositol. Is also able to dephosphorylate scyllo-inositol-phosphate, myo-inositol 1,4-diphosphate, scyllo-inositol-1,3-diphosphate and scyllo-inositol-1,4-diphosphate. Also dephosphorylates in vitro other sugar-phosphates including D-galactose-1-phosphate, glucose-1-phosphate, glucose-6-phosphate, fructose-1-phosphate, beta-glycerophosphate and 2'-AMP. Responsible for the provision of inositol required for synthesis of phosphatidylinositol and polyphosphoinositides, and involved in maintaining normal brain function. Has been implicated as the pharmacological target for lithium Li(+) action in brain. Is equally active with myo-inositol monophosphate and D-galactose 1-phosphate. The chain is Inositol monophosphatase 1 (Impa1) from Rattus norvegicus (Rat).